Consider the following 278-residue polypeptide: Esterase dbaE (278 aa).

Catalysis depends on charge relay system residues S124, D220, and H248.

The protein belongs to the LovG family.

It functions in the pathway secondary metabolite biosynthesis. Functionally, esterase; part of the gene cluster that mediates the biosynthesis of the antibiotic 2,4-dihydroxy-3-methyl-6-(2-oxopropyl)benzaldehyde (DHMBA) and its derivatives. The direct non-reducing polyketide synthase dbaI product is 2,4-dihydroxy-3-methyl-6-(2-oxopropyl)benzaldehyde (DHMBA), produced by condensation of one acetyl-CoA starter unit with 4 malonyl-CoA units and one methylation step. The FAD-dependent monooxygenase dbaH is responsible for the synthesis of yellow pigments derived from the oxidation of DHMBA. The roles of dbaB, C, E and F have still to be determined. The sequence is that of Esterase dbaE from Emericella nidulans (strain FGSC A4 / ATCC 38163 / CBS 112.46 / NRRL 194 / M139) (Aspergillus nidulans).